Consider the following 257-residue polypeptide: Putative carboxymethylenebutenolidase (257 aa).

Active-site residues include C148, D195, and H226.

This sequence belongs to the dienelactone hydrolase family.

The catalysed reaction is 2-(5-oxo-2,5-dihydrofuran-2-ylidene)acetate + H2O = 4-oxohex-2-enedioate + H(+). The chain is Putative carboxymethylenebutenolidase from Saccharolobus solfataricus (strain ATCC 35092 / DSM 1617 / JCM 11322 / P2) (Sulfolobus solfataricus).